The sequence spans 495 residues: Amidophosphoribosyltransferase (495 aa).

Residues 1–22 (MFPPSSDLTELNDGQPLSGHHA) form a disordered region. Residues 1 to 28 (MFPPSSDLTELNDGQPLSGHHADKPEEA) constitute a propeptide that is removed on maturation. Catalysis depends on Cys29, which acts as the Nucleophile. The 226-residue stretch at 29 to 254 (CGVFGIYAPE…AGELVHITES (226 aa)) folds into the Glutamine amidotransferase type-2 domain. Residue Cys270 participates in [4Fe-4S] cluster binding. The Mg(2+) site is built by Ser317, Asp379, and Asp380. The [4Fe-4S] cluster site is built by Cys416, Cys467, and Cys470.

It in the C-terminal section; belongs to the purine/pyrimidine phosphoribosyltransferase family. Mg(2+) serves as cofactor. [4Fe-4S] cluster is required as a cofactor.

It catalyses the reaction 5-phospho-beta-D-ribosylamine + L-glutamate + diphosphate = 5-phospho-alpha-D-ribose 1-diphosphate + L-glutamine + H2O. Its pathway is purine metabolism; IMP biosynthesis via de novo pathway; N(1)-(5-phospho-D-ribosyl)glycinamide from 5-phospho-alpha-D-ribose 1-diphosphate: step 1/2. Its function is as follows. Catalyzes the formation of phosphoribosylamine from phosphoribosylpyrophosphate (PRPP) and glutamine. In Synechocystis sp. (strain ATCC 27184 / PCC 6803 / Kazusa), this protein is Amidophosphoribosyltransferase.